A 144-amino-acid polypeptide reads, in one-letter code: Large ribosomal subunit protein uL15 (144 aa).

The disordered stretch occupies residues 1–57 (MKLNDLSPAPGSRREKHRPGRGIGSGLGKTGGRGHKGQSSRSGGTIAPGFEGGQQPL). Residues 21–31 (RGIGSGLGKTG) show a composition bias toward gly residues.

This sequence belongs to the universal ribosomal protein uL15 family. In terms of assembly, part of the 50S ribosomal subunit.

In terms of biological role, binds to the 23S rRNA. The protein is Large ribosomal subunit protein uL15 of Pseudomonas savastanoi pv. phaseolicola (strain 1448A / Race 6) (Pseudomonas syringae pv. phaseolicola (strain 1448A / Race 6)).